The chain runs to 195 residues: Small ribosomal subunit protein uS10c (195 aa).

The N-terminal 59 residues, 1–59 (MATSSISAALLSPLTLRNASSSSTKQDFSTLSSLNLRRTLTPTLQSGHTLSNSSNFATF), are a transit peptide targeting the chloroplast.

This sequence belongs to the universal ribosomal protein uS10 family. Component of the chloroplast small ribosomal subunit (SSU). Mature 70S chloroplast ribosomes of higher plants consist of a small (30S) and a large (50S) subunit. The 30S small subunit contains 1 molecule of ribosomal RNA (16S rRNA) and 24 different proteins. The 50S large subunit contains 3 rRNA molecules (23S, 5S and 4.5S rRNA) and 33 different proteins.

Its subcellular location is the plastid. The protein localises to the chloroplast. Its function is as follows. Component of the chloroplast ribosome (chloro-ribosome), a dedicated translation machinery responsible for the synthesis of chloroplast genome-encoded proteins, including proteins of the transcription and translation machinery and components of the photosynthetic apparatus. The polypeptide is Small ribosomal subunit protein uS10c (RPS10) (Spinacia oleracea (Spinach)).